Reading from the N-terminus, the 294-residue chain is Eukaryotic translation initiation factor 3 subunit G (294 aa).

Disordered stretches follow at residues 1–43 (MPSA…ENKI) and 160–211 (EDDG…RDET). The segment covering 194-211 (GANRRGETMPSRSQRDET) has biased composition (basic and acidic residues). In terms of domain architecture, RRM spans 212–290 (ATIRVTNLSE…LILNVEWAKP (79 aa)).

This sequence belongs to the eIF-3 subunit G family. In terms of assembly, component of the eukaryotic translation initiation factor 3 (eIF-3) complex.

It localises to the cytoplasm. In terms of biological role, RNA-binding component of the eukaryotic translation initiation factor 3 (eIF-3) complex, which is involved in protein synthesis of a specialized repertoire of mRNAs and, together with other initiation factors, stimulates binding of mRNA and methionyl-tRNAi to the 40S ribosome. The eIF-3 complex specifically targets and initiates translation of a subset of mRNAs involved in cell proliferation. This subunit can bind 18S rRNA. This Nematostella vectensis (Starlet sea anemone) protein is Eukaryotic translation initiation factor 3 subunit G.